The sequence spans 348 residues: Phospho-N-acetylmuramoyl-pentapeptide-transferase (348 aa).

10 helical membrane-spanning segments follow: residues 11–31 (SWMLLLATVFGLAFFLGIFLG), 68–88 (AGGILFCIVLLTTVFLWLPLG), 92–112 (TWLFVFLIISWGTLGWYDDII), 128–148 (FVIQLIISAITIVTIFSIYKG), 165–185 (VGHSILGKFFYFVLAMLTIVG), 196–216 (LDGLAAGTTCMSALGLLVVAL), 222–242 (PLAQDVSIVLSALIGISFAFL), 251–271 (VFMGDTGSLLIGGVLGSCAVM), 276–296 (LLLILLGGVFVAEAGSVILQV), and 326–346 (VVARFYIAGLLCMILGIIAAL).

The protein belongs to the glycosyltransferase 4 family. MraY subfamily. The cofactor is Mg(2+).

The protein resides in the cell inner membrane. The catalysed reaction is UDP-N-acetyl-alpha-D-muramoyl-L-alanyl-gamma-D-glutamyl-meso-2,6-diaminopimeloyl-D-alanyl-D-alanine + di-trans,octa-cis-undecaprenyl phosphate = di-trans,octa-cis-undecaprenyl diphospho-N-acetyl-alpha-D-muramoyl-L-alanyl-D-glutamyl-meso-2,6-diaminopimeloyl-D-alanyl-D-alanine + UMP. The protein operates within cell wall biogenesis; peptidoglycan biosynthesis. Catalyzes the initial step of the lipid cycle reactions in the biosynthesis of the cell wall peptidoglycan: transfers peptidoglycan precursor phospho-MurNAc-pentapeptide from UDP-MurNAc-pentapeptide onto the lipid carrier undecaprenyl phosphate, yielding undecaprenyl-pyrophosphoryl-MurNAc-pentapeptide, known as lipid I. The sequence is that of Phospho-N-acetylmuramoyl-pentapeptide-transferase from Chlamydia caviae (strain ATCC VR-813 / DSM 19441 / 03DC25 / GPIC) (Chlamydophila caviae).